The following is a 475-amino-acid chain: GDP-fucose protein O-fucosyltransferase 3 (475 aa).

Topologically, residues 1–8 are cytoplasmic; sequence MVRMRRKR. Residues 9–29 traverse the membrane as a helical; Signal-anchor for type II membrane protein segment; the sequence is LWASCICFAAFFFLLVTLQVI. The Lumenal segment spans residues 30-475; that stretch reads TELGNSENKA…QEFWMLVFKQ (446 aa). 3 N-linked (GlcNAc...) asparagine glycosylation sites follow: Asn-107, Asn-165, and Asn-315. A disulfide bond links Cys-386 and Cys-389. Residue Asn-462 is glycosylated (N-linked (GlcNAc...) asparagine).

The protein belongs to the glycosyltransferase 10 family.

It localises to the endoplasmic reticulum membrane. The enzyme catalyses L-threonyl-[protein] + GDP-beta-L-fucose = 3-O-(alpha-L-fucosyl)-L-threonyl-[protein] + GDP + H(+). It catalyses the reaction L-seryl-[protein] + GDP-beta-L-fucose = 3-O-(alpha-L-fucosyl)-L-seryl-[protein] + GDP + H(+). It participates in protein modification; protein glycosylation. Protein O-fucosyltransferase that specifically catalyzes O-fucosylation of serine or threonine residues in EMI domains of target proteins. Attaches fucose through an O-glycosidic linkage. O-fucosylation of EMI domain-containing proteins may be required for facilitating protein folding and secretion. The polypeptide is GDP-fucose protein O-fucosyltransferase 3 (FUT10) (Gallus gallus (Chicken)).